A 1348-amino-acid polypeptide reads, in one-letter code: ABC multidrug transporter atrD (1348 aa).

A compositionally biased stretch (polar residues) spans 1 to 10 (MSPLETNPLS). Residues 1 to 67 (MSPLETNPLS…HRPKSSSSNN (67 aa)) are disordered. Over residues 20–31 (ETSTTEEQASTP) the composition is skewed to low complexity. Residue Asn99 is glycosylated (N-linked (GlcNAc...) asparagine). 4 helical membrane-spanning segments follow: residues 114-134 (ILIMVISTICAIAAGAALPLF), 168-188 (YFVYLGIGEFVTVYVSTVGFI), 240-260 (KVGLTLTALATFVTAFIIAYV), and 268-288 (ICSSTIVALVLTMGGGSQFII). Positions 118–408 (VISTICAIAA…VSPNAQAFTN (291 aa)) constitute an ABC transmembrane type-1 1 domain. A glycan (N-linked (GlcNAc...) asparagine) is linked at Asn314. Helical transmembrane passes span 344–364 (IVMGFMIGAMFGLMYSNYGLG) and 371–391 (FLVDGAVDVGDILTVLMAILI). Positions 443 to 688 (IELRNVKHIY…GGAYRKLVEA (246 aa)) constitute an ABC transporter 1 domain. 478–485 (GPSGSGKS) is an ATP binding site. Asn550 is a glycosylation site (N-linked (GlcNAc...) asparagine). 2 helical membrane passes run 778–798 (MLIGLVFSVLAGGGQPTQAVL) and 825–845 (LMFFVVGIIQFITQSTNGAAF). One can recognise an ABC transmembrane type-1 2 domain in the interval 779–1068 (LIGLVFSVLA…VFSFAPDMGK (290 aa)). The N-linked (GlcNAc...) asparagine glycan is linked to Asn877. Transmembrane regions (helical) follow at residues 892 to 912 (HLSGVSGVTLGTILMTSTTLG), 925 to 947 (LALVCISVVPVLLACGFYRFYML), 1015 to 1035 (ALVFFCVALGFWYGGTLLGHH), and 1042 to 1062 (FFVCFSEILFGAQSAGTVFSF). An N-linked (GlcNAc...) asparagine glycan is attached at Asn1088. In terms of domain architecture, ABC transporter 2 spans 1103 to 1341 (IEFRNVHFRY…KGRYYELVNL (239 aa)). ATP is bound at residue 1138–1145 (GPSGCGKS).

Belongs to the ABC transporter superfamily. ABCB family. Multidrug resistance exporter (TC 3.A.1.201) subfamily.

It is found in the cell membrane. Fenamirol efflux transporter activity is inhibited by the cyclosporin derivative PSC 833, nigericin, reserpine and valinomycin. The effect of reserpine is transiant, while that of the cyclosporin derivative PSC 833, nigericin and valinomycin is proportional to the time of exposure. Cyclohexinmide has inhibitory effect only when applied prior to addition of the fungicide. In terms of biological role, pleiotropic ABC efflux transporter involved in the protection of the cells against a wide range of toxic compounds. Confers resistance to the azole fenarimol via efflux transport. May also be involved in the secretion of penicillin. In Emericella nidulans (Aspergillus nidulans), this protein is ABC multidrug transporter atrD.